The chain runs to 133 residues: Large ribosomal subunit protein bL19 (133 aa).

The protein belongs to the bacterial ribosomal protein bL19 family.

In terms of biological role, this protein is located at the 30S-50S ribosomal subunit interface and may play a role in the structure and function of the aminoacyl-tRNA binding site. The chain is Large ribosomal subunit protein bL19 from Sulfurihydrogenibium sp. (strain YO3AOP1).